A 298-amino-acid polypeptide reads, in one-letter code: Fluorinase (298 aa).

Residues Asp14, 19-21, Tyr75, Ser156, Asp209, Asn214, 268-269, and 276-278 each bind S-adenosyl-L-methionine; these read DDS, SR, and RNA.

It belongs to the SAM hydrolase / SAM-dependent halogenase family.

It catalyses the reaction fluoride + S-adenosyl-L-methionine = 5'-deoxy-5'-fluoroadenosine + L-methionine. In terms of biological role, catalyzes the formation of a C-F bond by combining S-adenosyl-L-methionine (SAM) and fluoride to generate 5'-fluoro-5'-deoxyadenosine (5'-FDA) and L-methionine. This is Fluorinase from Actinoplanes sp. (strain N902-109).